Reading from the N-terminus, the 498-residue chain is Probable cytosol aminopeptidase (498 aa).

The Mn(2+) site is built by lysine 264 and aspartate 269. The active site involves lysine 276. Mn(2+) is bound by residues aspartate 287, aspartate 346, and glutamate 348. Arginine 350 is a catalytic residue.

The protein belongs to the peptidase M17 family. The cofactor is Mn(2+).

Its subcellular location is the cytoplasm. The catalysed reaction is Release of an N-terminal amino acid, Xaa-|-Yaa-, in which Xaa is preferably Leu, but may be other amino acids including Pro although not Arg or Lys, and Yaa may be Pro. Amino acid amides and methyl esters are also readily hydrolyzed, but rates on arylamides are exceedingly low.. It carries out the reaction Release of an N-terminal amino acid, preferentially leucine, but not glutamic or aspartic acids.. Presumably involved in the processing and regular turnover of intracellular proteins. Catalyzes the removal of unsubstituted N-terminal amino acids from various peptides. In Rhizobium rhizogenes (strain K84 / ATCC BAA-868) (Agrobacterium radiobacter), this protein is Probable cytosol aminopeptidase.